The following is a 126-amino-acid chain: Holo-[acyl-carrier-protein] synthase (126 aa).

Positions 9 and 58 each coordinate Mg(2+).

Belongs to the P-Pant transferase superfamily. AcpS family. Mg(2+) is required as a cofactor.

Its subcellular location is the cytoplasm. The catalysed reaction is apo-[ACP] + CoA = holo-[ACP] + adenosine 3',5'-bisphosphate + H(+). Its function is as follows. Transfers the 4'-phosphopantetheine moiety from coenzyme A to a Ser of acyl-carrier-protein. The protein is Holo-[acyl-carrier-protein] synthase of Edwardsiella ictaluri (strain 93-146).